The chain runs to 182 residues: Ribosome maturation factor RimM (182 aa).

The 80-residue stretch at 103–182 folds into the PRC barrel domain; sequence EDDYYWKDLM…RVEVDWDPGF (80 aa).

It belongs to the RimM family. In terms of assembly, binds ribosomal protein uS19.

It is found in the cytoplasm. An accessory protein needed during the final step in the assembly of 30S ribosomal subunit, possibly for assembly of the head region. Essential for efficient processing of 16S rRNA. May be needed both before and after RbfA during the maturation of 16S rRNA. It has affinity for free ribosomal 30S subunits but not for 70S ribosomes. This Yersinia pestis (strain Pestoides F) protein is Ribosome maturation factor RimM.